The chain runs to 479 residues: Rifampicin monooxygenase (479 aa).

FAD contacts are provided by Thr12, Asp31, Lys32, Arg41, Gln98, Val122, Thr156, Asp278, Leu291, and Asn292.

The protein belongs to the rifampicin monooxygenase family. Requires FAD as cofactor.

The catalysed reaction is rifampicin + NADPH + O2 = rifampicin para-naphthoquinone carboxamide + NADP(+) + H2O + H(+). It catalyses the reaction rifampicin + NADH + O2 = rifampicin para-naphthoquinone carboxamide + NAD(+) + H2O + H(+). Its function is as follows. Monooxygenase that can modify rifampicin, thereby inactivating its antibiotic activity. This chain is Rifampicin monooxygenase, found in Rhodococcus hoagii (Corynebacterium equii).